Consider the following 331-residue polypeptide: ADP-L-glycero-D-manno-heptose-6-epimerase (331 aa).

NADP(+)-binding positions include 11-12 (FI), 32-33 (DN), Lys39, Lys54, 75-79 (EGACS), and Asn92. Tyr139 functions as the Proton acceptor in the catalytic mechanism. Lys143 is an NADP(+) binding site. Asn168 is a substrate binding site. NADP(+)-binding residues include Val169 and Lys177. The active-site Proton acceptor is the Lys177. Substrate is bound by residues Arg179, His186, 200 to 203 (FGEY), Arg213, and Tyr292.

The protein belongs to the NAD(P)-dependent epimerase/dehydratase family. HldD subfamily. Homopentamer. NADP(+) is required as a cofactor.

It catalyses the reaction ADP-D-glycero-beta-D-manno-heptose = ADP-L-glycero-beta-D-manno-heptose. It participates in nucleotide-sugar biosynthesis; ADP-L-glycero-beta-D-manno-heptose biosynthesis; ADP-L-glycero-beta-D-manno-heptose from D-glycero-beta-D-manno-heptose 7-phosphate: step 4/4. Its function is as follows. Catalyzes the interconversion between ADP-D-glycero-beta-D-manno-heptose and ADP-L-glycero-beta-D-manno-heptose via an epimerization at carbon 6 of the heptose. In Cupriavidus metallidurans (strain ATCC 43123 / DSM 2839 / NBRC 102507 / CH34) (Ralstonia metallidurans), this protein is ADP-L-glycero-D-manno-heptose-6-epimerase.